A 475-amino-acid polypeptide reads, in one-letter code: MADLQKQENSSRFTNVSVIAPESQGQHEQQKQQEQLEQQKQPTGLLKGLNGFPSAPQPLFMEDPPSTVSGELNDNPAWFNNPRKRAIPNSIIKRSNGQSLSPVRSDSADVPAFSNSNGFNNVTFGSKKDPRILKNVSPNDNNSANNNAHSSDLGTVVFDSNEAPPKTSLADWQKEDGIFSSKTDNIEDPNLSSNITFDGKPTATPSPFRPLEKTSRILNFFDKNTKTTPNTASSEASAGSKEGASTNWDDHAIIIFGYPETIANSIILHFANFGEILEDFRVIKDFKKLNSKNMSKSPSLTAQKYPIYTGDGWVKLTYKSELSKSRALQENGIIMNGTLIGCVSYSPAALKQLASLKKSEEIINNKTSSQTSLSSKDLSNYRKTEGIFEKAKAKAVTSKVRNAEFKVSKNSTSFKNPRRLEIKDGRSLFLRNRGKIHSGVLSSIESDLKKREQASKSKKSWLNRLNNWLFGWNDL.

2 disordered regions span residues 1-83 (MADL…NNPR) and 89-108 (NSII…SDSA). Ala2 is subject to N-acetylalanine. A compositionally biased stretch (polar residues) spans 7 to 17 (QENSSRFTNVS). The segment covering 22–41 (ESQGQHEQQKQQEQLEQQKQ) has biased composition (low complexity). The segment covering 92–104 (IKRSNGQSLSPVR) has biased composition (polar residues). Ser101 carries the post-translational modification Phosphoserine. Residues 124-125 (FG) form an FG 1 repeat. Disordered regions lie at residues 190-209 (NLSS…SPFR) and 222-244 (DKNT…KEGA). The segment covering 232-244 (ASSEASAGSKEGA) has biased composition (low complexity). Positions 247–352 (NWDDHAIIIF…VSYSPAALKQ (106 aa)) constitute an RRM Nup35-type domain. 2 FG repeats span residues 264–265 (NS) and 273–274 (FG). Residues Ser297 and Ser438 each carry the phosphoserine modification. The PSE1 binding stretch occupies residues 405-438 (FKVSKNSTSFKNPRRLEIKDGRSLFLRNRGKIHS). The tract at residues 449–475 (KKREQASKSKKSWLNRLNNWLFGWNDL) is required for nuclear membrane association and proliferation. Residues 470–471 (FG) form an FG 4 repeat.

Component of the nuclear pore complex (NPC). NPC constitutes the exclusive means of nucleocytoplasmic transport. NPCs allow the passive diffusion of ions and small molecules and the active, nuclear transport receptor-mediated bidirectional transport of macromolecules such as proteins, RNAs, ribonucleoparticles (RNPs), and ribosomal subunits across the nuclear envelope. Due to its 8-fold rotational symmetry, all subunits are present with 8 copies or multiples thereof. NUP53 interacts with MAD1-MAD2. During mitosis NUP53 changes its binding partner within the NPC from NUP170 to NIC96, exposing a high affinity binding site for the karyopherin PSE1, and retaining it in the NPC, while MAD2 is released. It forms a subcomplex with ASM4 and NDC1. In terms of processing, phosphorylated by CDC28.

Its subcellular location is the nucleus. It is found in the nuclear pore complex. The protein resides in the nucleus membrane. Its function is as follows. Functions as a component of the nuclear pore complex (NPC). NPC components, collectively referred to as nucleoporins (NUPs), can play the role of both NPC structural components and of docking or interaction partners for transiently associated nuclear transport factors. Active directional transport is assured by both, a Phe-Gly (FG) repeat affinity gradient for these transport factors across the NPC and a transport cofactor concentration gradient across the nuclear envelope (GSP1 and GSP2 GTPases associated predominantly with GTP in the nucleus, with GDP in the cytoplasm). NUP53 may play an important role in cell cycle regulation by inhibiting PSE1 transport functions during mitosis and sequestration of MAD1-MAD2 in a cell cycle-dependent manner. It also seems to play an important role in de novo NPC assembly by associating with nuclear membranes and driving their proliferation. The polypeptide is Nucleoporin NUP53 (NUP53) (Saccharomyces cerevisiae (strain ATCC 204508 / S288c) (Baker's yeast)).